We begin with the raw amino-acid sequence, 487 residues long: ATP synthase subunit beta 1 (487 aa).

162–169 contributes to the ATP binding site; the sequence is GGAGVGKT.

It belongs to the ATPase alpha/beta chains family. In terms of assembly, F-type ATPases have 2 components, CF(1) - the catalytic core - and CF(0) - the membrane proton channel. CF(1) has five subunits: alpha(3), beta(3), gamma(1), delta(1), epsilon(1). CF(0) has three main subunits: a(1), b(2) and c(9-12). The alpha and beta chains form an alternating ring which encloses part of the gamma chain. CF(1) is attached to CF(0) by a central stalk formed by the gamma and epsilon chains, while a peripheral stalk is formed by the delta and b chains.

Its subcellular location is the cell inner membrane. The enzyme catalyses ATP + H2O + 4 H(+)(in) = ADP + phosphate + 5 H(+)(out). Produces ATP from ADP in the presence of a proton gradient across the membrane. The catalytic sites are hosted primarily by the beta subunits. The polypeptide is ATP synthase subunit beta 1 (Gluconobacter oxydans (strain 621H) (Gluconobacter suboxydans)).